The following is a 677-amino-acid chain: DNA-directed RNA polymerase subunit beta' (677 aa).

Residues cysteine 69, cysteine 71, cysteine 87, and cysteine 90 each coordinate Zn(2+). Residues aspartate 489, aspartate 491, and aspartate 493 each coordinate Mg(2+).

Belongs to the RNA polymerase beta' chain family. RpoC1 subfamily. In plastids the minimal PEP RNA polymerase catalytic core is composed of four subunits: alpha, beta, beta', and beta''. When a (nuclear-encoded) sigma factor is associated with the core the holoenzyme is formed, which can initiate transcription. Mg(2+) serves as cofactor. Zn(2+) is required as a cofactor.

The protein resides in the plastid. Its subcellular location is the chloroplast. It catalyses the reaction RNA(n) + a ribonucleoside 5'-triphosphate = RNA(n+1) + diphosphate. DNA-dependent RNA polymerase catalyzes the transcription of DNA into RNA using the four ribonucleoside triphosphates as substrates. In Daucus carota (Wild carrot), this protein is DNA-directed RNA polymerase subunit beta'.